A 940-amino-acid polypeptide reads, in one-letter code: Chordin (940 aa).

Residues 1–19 (MMEGLLWILLSVIIASVHG) form the signal peptide. The 77-residue stretch at 42–118 (SGCSFGGRFY…LPGHCCKTCP (77 aa)) folds into the VWFC 1 domain. CHRD domains follow at residues 162-277 (TTTD…KHRA), 279-398 (FAET…GRRS), 404-519 (SVLS…LLPY), and 525-652 (RRNE…VPNH). N-linked (GlcNAc...) asparagine glycans are attached at residues Asn-347 and Asn-430. 3 consecutive VWFC domains span residues 689–748 (HSCF…PICE), 767–836 (EGCY…KECP), and 855–919 (RLCK…PECI).

Belongs to the chordin family. Interacts with twsg1 and/or bmp4. Post-translationally, cleaved by tolloid proteases; cleavage participates in dorsoventral patterning during early development.

The protein resides in the secreted. Dorsalizing factor. Key developmental protein that dorsalizes early vertebrate embryonic tissues by binding to ventralizing TGF-beta family bone morphogenetic proteins (BMPs) and sequestering them in latent complexes. This is Chordin (chd) from Danio rerio (Zebrafish).